The sequence spans 127 residues: Small ribosomal subunit protein uS11 (127 aa).

This sequence belongs to the universal ribosomal protein uS11 family. Part of the 30S ribosomal subunit. Interacts with proteins S7 and S18. Binds to IF-3.

Its function is as follows. Located on the platform of the 30S subunit, it bridges several disparate RNA helices of the 16S rRNA. Forms part of the Shine-Dalgarno cleft in the 70S ribosome. This is Small ribosomal subunit protein uS11 from Chlorobaculum tepidum (strain ATCC 49652 / DSM 12025 / NBRC 103806 / TLS) (Chlorobium tepidum).